A 213-amino-acid chain; its full sequence is Orotate phosphoribosyltransferase (213 aa).

K26 serves as a coordination point for 5-phospho-alpha-D-ribose 1-diphosphate. 34 to 35 (FF) contributes to the orotate binding site. 5-phospho-alpha-D-ribose 1-diphosphate-binding positions include 72–73 (YK), R99, K100, K103, H105, and 124–132 (DDVITAGTA). Orotate contacts are provided by T128 and R156.

Belongs to the purine/pyrimidine phosphoribosyltransferase family. PyrE subfamily. As to quaternary structure, homodimer. The cofactor is Mg(2+).

It catalyses the reaction orotidine 5'-phosphate + diphosphate = orotate + 5-phospho-alpha-D-ribose 1-diphosphate. It functions in the pathway pyrimidine metabolism; UMP biosynthesis via de novo pathway; UMP from orotate: step 1/2. In terms of biological role, catalyzes the transfer of a ribosyl phosphate group from 5-phosphoribose 1-diphosphate to orotate, leading to the formation of orotidine monophosphate (OMP). This chain is Orotate phosphoribosyltransferase, found in Erwinia tasmaniensis (strain DSM 17950 / CFBP 7177 / CIP 109463 / NCPPB 4357 / Et1/99).